A 440-amino-acid polypeptide reads, in one-letter code: Chitinase-like protein Idgf5 (440 aa).

The N-terminal stretch at 1-27 is a signal peptide; that stretch reads MRNKMIYFNFHLFVIIFANLQIFQVQA. Positions 28–439 constitute a GH18 domain; that stretch reads ANIFCYYDTQ…KSIHNAFKKF (412 aa). Cysteine 32 and cysteine 56 are joined by a disulfide. N-linked (GlcNAc...) asparagine glycosylation is found at asparagine 126, asparagine 283, and asparagine 403. A disulfide bridge connects residues cysteine 340 and cysteine 421.

This sequence belongs to the glycosyl hydrolase 18 family. IDGF subfamily. In terms of processing, glycosylated.

It is found in the secreted. Functionally, cooperates with insulin-like peptides to stimulate the proliferation, polarization and motility of imaginal disk cells. May act by stabilizing the binding of insulin-like peptides to its receptor through a simultaneous interaction with both molecules to form a multiprotein signaling complex. The protein is Chitinase-like protein Idgf5 (Idgf5) of Glossina morsitans morsitans (Savannah tsetse fly).